The sequence spans 296 residues: Acetylglutamate kinase (296 aa).

Residues 69-70 (GG), Arg-91, and Asn-193 each bind substrate.

It belongs to the acetylglutamate kinase family. ArgB subfamily.

The protein resides in the cytoplasm. It catalyses the reaction N-acetyl-L-glutamate + ATP = N-acetyl-L-glutamyl 5-phosphate + ADP. It participates in amino-acid biosynthesis; L-arginine biosynthesis; N(2)-acetyl-L-ornithine from L-glutamate: step 2/4. Functionally, catalyzes the ATP-dependent phosphorylation of N-acetyl-L-glutamate. In Paracidovorax citrulli (strain AAC00-1) (Acidovorax citrulli), this protein is Acetylglutamate kinase.